Consider the following 330-residue polypeptide: Putative zinc finger protein CONSTANS-LIKE 11 (330 aa).

Zn(2+)-binding residues include cysteine 5, cysteine 8, cysteine 28, and histidine 33. Residues 5–47 form a B box-type 1; atypical zinc finger; that stretch reads CDFCGTEKALIYCKSDSAKLCLNCDVNVHSANPLSQRHTRSLL. Residues 48–88 form a B box-type 2; degenerate zinc finger; the sequence is CEKCSLQPTAVHCMNENVSLCQGCQWTASNCTGLGHRLQSL. Residues 276-318 enclose the CCT domain; it reads RDEAKKRYKQKKSKRMFGKQIRYASRKARADTRKRVKGRFVKS.

It belongs to the CONSTANS family.

It localises to the nucleus. This Arabidopsis thaliana (Mouse-ear cress) protein is Putative zinc finger protein CONSTANS-LIKE 11 (COL11).